Reading from the N-terminus, the 512-residue chain is MNLFDLSILPFLNLAQVVNESRVPNVPDLLSVLPALVLATGGVFLICLSVLFKTKEFIIVRYVSGLILLLAFAAVFYTSFRFPGNGFHFSGQIENSVLSFWLNLIYISMAIGTAAIVPRILKNHKIEFPEFYPLLLFATCGMTLMTTGQDFILVFVALELMSICLYILIGMARSDLFSLEATLKYFLLGSFSSGFMLMGIAFLFGGSGSTNITEALKPLTIAGYQGNFAKIGLVLFITGVAFKIALFPYHAWTPDAYEGALTPVTGYMSTAAKAASIGLLLILYTKLPLPLENSTWAWLPGILALCSMIYGNLLALKQENLKRMLAYSSIAHAGYVVAGISAGIKEEVLFYLIVYSFMSLGAFAILAYLEEGTRQVTFFSVQSLSGVKPLTAIAINIFFMSLAGVPPFGGFWAKLFLFQKLAESETLMNRILLIGGVTNSALALYYYLRIGIATFMSSDEGEISRNHAAPYSVGVTGVVLFCLLMVSVGWFLLVPGNLLALGELWLSSSIFR.

14 consecutive transmembrane segments (helical) span residues 32-52 (VLPA…SVLF), 57-77 (FIIV…AVFY), 97-117 (VLSF…AAIV), 126-146 (IEFP…TLMT), 151-171 (FILV…LIGM), 186-206 (FLLG…LFGG), 231-251 (IGLV…PYHA), 264-284 (VTGY…LILY), 296-316 (WAWL…LLAL), 324-344 (MLAY…SAGI), 348-368 (VLFY…ILAY), 392-412 (AIAI…GGFW), 431-451 (ILLI…LRIG), and 473-493 (VGVT…WFLL).

It belongs to the complex I subunit 2 family. NDH-1 is composed of 14 different subunits. Subunits NuoA, H, J, K, L, M, N constitute the membrane sector of the complex.

It localises to the cell inner membrane. It catalyses the reaction a quinone + NADH + 5 H(+)(in) = a quinol + NAD(+) + 4 H(+)(out). NDH-1 shuttles electrons from NADH, via FMN and iron-sulfur (Fe-S) centers, to quinones in the respiratory chain. The immediate electron acceptor for the enzyme in this species is believed to be ubiquinone. Couples the redox reaction to proton translocation (for every two electrons transferred, four hydrogen ions are translocated across the cytoplasmic membrane), and thus conserves the redox energy in a proton gradient. The protein is NADH-quinone oxidoreductase subunit N of Leptospira interrogans serogroup Icterohaemorrhagiae serovar Lai (strain 56601).